The primary structure comprises 638 residues: Threonine--tRNA ligase (638 aa).

The TGS domain maps to 1–61 (MPIITLPDGS…NKDSKVVIIT (61 aa)). The catalytic stretch occupies residues 242–533 (DHRKLGKKHS…LIEQYEAKFP (292 aa)). Residues Cys-333, His-384, and His-510 each contribute to the Zn(2+) site.

It belongs to the class-II aminoacyl-tRNA synthetase family. Homodimer. It depends on Zn(2+) as a cofactor.

The protein localises to the cytoplasm. The catalysed reaction is tRNA(Thr) + L-threonine + ATP = L-threonyl-tRNA(Thr) + AMP + diphosphate + H(+). Functionally, catalyzes the attachment of threonine to tRNA(Thr) in a two-step reaction: L-threonine is first activated by ATP to form Thr-AMP and then transferred to the acceptor end of tRNA(Thr). Also edits incorrectly charged L-seryl-tRNA(Thr). The polypeptide is Threonine--tRNA ligase (Prochlorococcus marinus (strain MIT 9301)).